The chain runs to 1378 residues: Carboxypeptidase D (1378 aa).

A signal peptide spans 1-37; that stretch reads MASGWDERPPWRLESLRLLPPPPLLLLLLLLRSSAQA. At 38-1297 the chain is on the extracellular side; the sequence is AHIKKAEATT…DNRIFGLPRE (1260 aa). The region spanning 62 to 380 is the Peptidase M14 1 domain; it reads HYYHEAALGE…ESLITLIEKV (319 aa). 2 residues coordinate Zn(2+): His-139 and Glu-142. The Cell attachment site motif lies at 162 to 164; sequence RGD. N-linked (GlcNAc...) asparagine glycosylation is found at Asn-172 and Asn-217. The tract at residues 189-232 is disordered; that stretch reads RAREGDCGLGDSGPPGTSGRDNSRGRDLNRSFPDQFSTGEPPSL. Position 257 (His-257) interacts with Zn(2+). Position 265 is a phosphotyrosine (Tyr-265). Ser-270 carries the phosphoserine modification. Glu-350 functions as the Proton donor/acceptor in the catalytic mechanism. 4 N-linked (GlcNAc...) asparagine glycosylation sites follow: Asn-399, Asn-410, Asn-429, and Asn-522. The Peptidase M14 2 domain occupies 502-792; the sequence is HHHHFPDMEI…RSLIQFMKQV (291 aa). 2 residues coordinate Zn(2+): His-564 and Glu-567. Asn-626 carries an N-linked (GlcNAc...) asparagine glycan. His-671 lines the Zn(2+) pocket. The active-site Proton donor/acceptor is the Glu-762. Residues Asn-811, Asn-855, Asn-867, Asn-879, Asn-953, and Asn-976 are each glycosylated (N-linked (GlcNAc...) asparagine). The disordered stretch occupies residues 875-898; that stretch reads TDANNESKKGKGHSTSTDDTSDPT. The 280-residue stretch at 930–1209 folds into the Peptidase M14 3 domain; sequence RYHSYKDLSE…KSLLSMLVEV (280 aa). The span at 1039–1048 shows a compositional bias: basic and acidic residues; it reads RERAQEKDCT. The interval 1039 to 1068 is disordered; that stretch reads RERAQEKDCTSKTGHTNARGRDLDTDFTSN. N-linked (GlcNAc...) asparagine glycosylation is found at Asn-1068 and Asn-1140. Residues 1298–1318 form a helical membrane-spanning segment; sequence LVVTVSGATMSALILTACIIW. 3 S-palmitoyl cysteine lipidation sites follow: Cys-1315, Cys-1319, and Cys-1321. At 1319–1378 the chain is on the cytoplasmic side; sequence CICSIKSNRHKDGFHRLRQHHDEYEDEIRMMSTGSKKSLLSHEFQDETDTEEETLYSSKH. A phosphoserine mark is found at Ser-1356 and Ser-1359. The interval 1357–1378 is disordered; the sequence is LLSHEFQDETDTEEETLYSSKH. Thr-1366 and Thr-1368 each carry phosphothreonine.

This sequence belongs to the peptidase M14 family. Zn(2+) is required as a cofactor. As to expression, isoform 1 is widely expressed with highest levels in the hippocampus, spinal cord, atrium, colon, testis and ovaries. Detected in the liver of females but not males. Isoform 2 is not detected in brain or lung.

It localises to the cell membrane. The protein localises to the nucleus. It catalyses the reaction Releases C-terminal Arg and Lys from polypeptides.. This is Carboxypeptidase D from Rattus norvegicus (Rat).